A 257-amino-acid polypeptide reads, in one-letter code: Molybdate-binding protein ModA (257 aa).

Positions 1-24 (MARKWLNLFAGAALSFAVAGNALA) are cleaved as a signal peptide. Positions 36, 63, 149, 176, and 194 each coordinate molybdate.

It belongs to the bacterial solute-binding protein ModA family. As to quaternary structure, the complex is composed of two ATP-binding proteins (ModC), two transmembrane proteins (ModB) and a solute-binding protein (ModA).

It localises to the periplasm. Functionally, part of the ABC transporter complex ModABC involved in the transport of molybdenum into the cell. Binds molybdate with high affinity in vitro and with a similar affinity in vivo. Binds tungstate with high affinity in vitro. Binds unnatural anion perrhenate with high affinity in vitro. Does not bind sulfate, phosphate, arsenate, selenate, chlorate, metavanadate, nitrate, perchlorate, permanganate or carbonate. This chain is Molybdate-binding protein ModA (modA), found in Escherichia coli (strain K12).